A 110-amino-acid polypeptide reads, in one-letter code: Thioredoxin Asp f 29 (110 aa).

The 110-residue stretch at 1-110 (MSHNVEKITD…LEAAIKAHVA (110 aa)) folds into the Thioredoxin domain. Residues cysteine 34 and cysteine 37 each act as nucleophile in the active site. Cysteine 34 and cysteine 37 form a disulfide bridge.

This sequence belongs to the thioredoxin family.

In terms of biological role, participates in various redox reactions through the reversible oxidation of its active center dithiol to a disulfide and catalyzes dithiol-disulfide exchange reactions. The sequence is that of Thioredoxin Asp f 29 from Aspergillus fumigatus (Neosartorya fumigata).